We begin with the raw amino-acid sequence, 297 residues long: Pyrroline-5-carboxylate reductase 1 (297 aa).

Belongs to the pyrroline-5-carboxylate reductase family.

Its subcellular location is the cytoplasm. The catalysed reaction is L-proline + NADP(+) = (S)-1-pyrroline-5-carboxylate + NADPH + 2 H(+). It carries out the reaction L-proline + NAD(+) = (S)-1-pyrroline-5-carboxylate + NADH + 2 H(+). It functions in the pathway amino-acid biosynthesis; L-proline biosynthesis; L-proline from L-glutamate 5-semialdehyde: step 1/1. In terms of biological role, catalyzes the reduction of 1-pyrroline-5-carboxylate (PCA) to L-proline. The polypeptide is Pyrroline-5-carboxylate reductase 1 (proH) (Bacillus spizizenii (strain ATCC 23059 / NRRL B-14472 / W23) (Bacillus subtilis subsp. spizizenii)).